A 176-amino-acid polypeptide reads, in one-letter code: Small ribosomal subunit protein uS4 (176 aa).

Residues R104–P166 enclose the S4 RNA-binding domain.

It belongs to the universal ribosomal protein uS4 family. As to quaternary structure, part of the 30S ribosomal subunit. Contacts protein S5. The interaction surface between S4 and S5 is involved in control of translational fidelity.

One of the primary rRNA binding proteins, it binds directly to 16S rRNA where it nucleates assembly of the body of the 30S subunit. In terms of biological role, with S5 and S12 plays an important role in translational accuracy. In Sulfolobus acidocaldarius (strain ATCC 33909 / DSM 639 / JCM 8929 / NBRC 15157 / NCIMB 11770), this protein is Small ribosomal subunit protein uS4 (rps4).